A 294-amino-acid chain; its full sequence is 2-hydroxy-3-oxopropionate reductase (294 aa).

Residues 4-18 (GFIG…MSKN) and Ser-95 contribute to the NAD(+) site. Residue Lys-170 is part of the active site. Residue Lys-238 participates in NAD(+) binding.

It belongs to the HIBADH-related family. 2-hydroxy-3-oxopropionate reductase subfamily.

It catalyses the reaction (R)-glycerate + NADP(+) = 2-hydroxy-3-oxopropanoate + NADPH + H(+). The catalysed reaction is (R)-glycerate + NAD(+) = 2-hydroxy-3-oxopropanoate + NADH + H(+). The protein operates within carbohydrate acid metabolism; galactarate degradation; D-glycerate from galactarate: step 3/3. In terms of biological role, catalyzes the reduction of tatronate semialdehyde to D-glycerate. This chain is 2-hydroxy-3-oxopropionate reductase, found in Escherichia coli O6:H1 (strain CFT073 / ATCC 700928 / UPEC).